The primary structure comprises 90 residues: Bombyxin G-1 (90 aa).

Residues methionine 1 to glycine 19 form the signal peptide. Intrachain disulfides connect cysteine 28–cysteine 77, cysteine 40–cysteine 90, and cysteine 76–cysteine 81. A propeptide spans asparagine 49–isoleucine 67 (c peptide like).

It belongs to the insulin family. In terms of assembly, heterodimer of a B chain and an A chain linked by two disulfide bonds.

The protein localises to the secreted. The protein is Bombyxin G-1 (BBXG1) of Bombyx mori (Silk moth).